The chain runs to 291 residues: Bis(5'-nucleosyl)-tetraphosphatase, symmetrical (291 aa).

This sequence belongs to the Ap4A hydrolase family.

The enzyme catalyses P(1),P(4)-bis(5'-adenosyl) tetraphosphate + H2O = 2 ADP + 2 H(+). Hydrolyzes diadenosine 5',5'''-P1,P4-tetraphosphate to yield ADP. The chain is Bis(5'-nucleosyl)-tetraphosphatase, symmetrical from Coxiella burnetii (strain CbuK_Q154) (Coxiella burnetii (strain Q154)).